A 509-amino-acid chain; its full sequence is Activin receptor type-1 (509 aa).

Residues 1–20 (MVDGVMILPVLMMMAFPSPS) form the signal peptide. The Extracellular portion of the chain corresponds to 21–123 (VEDEKPKVNQ…FPGTQNFHLE (103 aa)). An N-linked (GlcNAc...) asparagine glycan is attached at Asn-102. A helical transmembrane segment spans residues 124-146 (VGLIILSVVFAVCLLACILGVAL). Residues 147 to 509 (RKFKRRNQER…NSLDKLKTDC (363 aa)) lie on the Cytoplasmic side of the membrane. Residues 178 to 207 (STLAELLDHSCTSGSGSGLPFLVQRTVARQ) enclose the GS domain. The region spanning 208-502 (ITLLECVGKG…KTLTKIDNSL (295 aa)) is the Protein kinase domain. ATP-binding positions include 214-222 (VGKGRYGEV) and Lys-235. Residue Asp-336 is the Proton acceptor of the active site. Phosphoserine is present on Ser-501.

It belongs to the protein kinase superfamily. TKL Ser/Thr protein kinase family. TGFB receptor subfamily. Interacts with FKBP1A. Interacts with FCHO1. Interacts with CLU. Interacts with type II receptors AMHR2 and ACVR2A. Interacts with BMP7. Interacts with BMP9. Interacts with BMP6 (when glycosylated); the interaction may induce HAMP expression. Interacts with TSC22D1/TSC-22. Mg(2+) serves as cofactor. It depends on Mn(2+) as a cofactor. In terms of tissue distribution, highly expressed in bone during developmental stages. Expressed in normal parenchymal cells, endothelial cells, fibroblasts and tumor-derived epithelial cells.

It localises to the membrane. The enzyme catalyses L-threonyl-[receptor-protein] + ATP = O-phospho-L-threonyl-[receptor-protein] + ADP + H(+). The catalysed reaction is L-seryl-[receptor-protein] + ATP = O-phospho-L-seryl-[receptor-protein] + ADP + H(+). In terms of biological role, bone morphogenetic protein (BMP) type I receptor that is involved in a wide variety of biological processes, including bone, heart, cartilage, nervous, and reproductive system development and regulation. As a type I receptor, forms heterotetrameric receptor complexes with the type II receptors AMHR2, ACVR2A ors ACVR2B. Upon binding of ligands such as BMP7 or BMP9 to the heteromeric complexes, type II receptors transphosphorylate ACVR1 intracellular domain. In turn, ACVR1 kinase domain is activated and subsequently phosphorylates SMAD1/5/8 proteins that transduce the signal. In addition to its role in mediating BMP pathway-specific signaling, suppresses TGFbeta/activin pathway signaling by interfering with the binding of activin to its type II receptor. Besides canonical SMAD signaling, can activate non-canonical pathways such as p38 mitogen-activated protein kinases/MAPKs. May promote the expression of HAMP, potentially via its interaction with BMP6. This Mus musculus (Mouse) protein is Activin receptor type-1 (Acvr1).